The primary structure comprises 107 residues: MMYKQISHLEAWELVKKRDIVIADVRDQDSYEEEHIANALHLSMAKLQEYSEKADKEKPVLVYCYHGISSQSVAQHLVEQGFKEVYSLIGGFETWKAHHPTSDANKN.

The region spanning 16–104 (KKRDIVIADV…WKAHHPTSDA (89 aa)) is the Rhodanese domain. Cysteine 64 acts as the Cysteine persulfide intermediate in catalysis.

The protein belongs to the GlpE family.

Its subcellular location is the cytoplasm. The catalysed reaction is thiosulfate + hydrogen cyanide = thiocyanate + sulfite + 2 H(+). The enzyme catalyses thiosulfate + [thioredoxin]-dithiol = [thioredoxin]-disulfide + hydrogen sulfide + sulfite + 2 H(+). Functionally, transferase that catalyzes the transfer of sulfur from thiosulfate to thiophilic acceptors such as cyanide or dithiols. May function in a CysM-independent thiosulfate assimilation pathway by catalyzing the conversion of thiosulfate to sulfite, which can then be used for L-cysteine biosynthesis. This Coxiella burnetii (strain CbuK_Q154) (Coxiella burnetii (strain Q154)) protein is Thiosulfate sulfurtransferase GlpE.